A 491-amino-acid polypeptide reads, in one-letter code: Glycylpeptide N-tetradecanoyltransferase (491 aa).

Tetradecanoyl-CoA is bound at residue 45–48 (HKFW). Residues 53-79 (VPQITGSGASAPMEEGPIDDPKTPADV) form a disordered region. Residues 182–184 (LCV) and 190–194 (SKRLA) each bind tetradecanoyl-CoA. L491 serves as the catalytic Proton acceptor; via carboxylate.

This sequence belongs to the NMT family. As to quaternary structure, monomer.

It localises to the cytoplasm. The catalysed reaction is N-terminal glycyl-[protein] + tetradecanoyl-CoA = N-tetradecanoylglycyl-[protein] + CoA + H(+). Functionally, adds a myristoyl group to the N-terminal glycine residue of certain cellular proteins. This chain is Glycylpeptide N-tetradecanoyltransferase, found in Cryptococcus neoformans (Filobasidiella neoformans).